Here is a 93-residue protein sequence, read N- to C-terminus: Small ribosomal subunit protein uS19 (93 aa).

It belongs to the universal ribosomal protein uS19 family.

Functionally, protein S19 forms a complex with S13 that binds strongly to the 16S ribosomal RNA. In Campylobacter concisus (strain 13826), this protein is Small ribosomal subunit protein uS19.